Consider the following 367-residue polypeptide: Cis-3-hydroxy-L-proline dehydratase (367 aa).

K165 serves as the catalytic Proton donor/acceptor. D193, E218, and D241 together coordinate Mg(2+). Catalysis depends on K265, which acts as the Proton donor/acceptor.

It belongs to the mandelate racemase/muconate lactonizing enzyme family. It depends on Mg(2+) as a cofactor.

It catalyses the reaction cis-3-hydroxy-L-proline = 1-pyrroline-2-carboxylate + H2O. Catalyzes the dehydration of cis-3-hydroxy-L-proline (c3LHyp) to Delta(1)-pyrroline-2-carboxylate (Pyr2C). Is likely involved in a degradation pathway that converts c3LHyp to L-proline, which allows L.aggregata to grow on c3LHyp as a sole carbon source. Also catalyzes the epimerization of c3LHyp to trans-3-hydroxy-D-proline (t3DHyp), a competing reaction occurring from the same enolate anion intermediate. L-proline, t3LHyp, t4LHyp, c4DHyp and their methylated derivatives are not substrates. This is Cis-3-hydroxy-L-proline dehydratase from Roseibium aggregatum (strain ATCC 25650 / DSM 13394 / JCM 20685 / NBRC 16684 / NCIMB 2208 / IAM 12614 / B1) (Stappia aggregata).